Consider the following 332-residue polypeptide: Ribosomal RNA small subunit methyltransferase C (332 aa).

It belongs to the methyltransferase superfamily. RsmC family. As to quaternary structure, monomer.

The protein localises to the cytoplasm. The catalysed reaction is guanosine(1207) in 16S rRNA + S-adenosyl-L-methionine = N(2)-methylguanosine(1207) in 16S rRNA + S-adenosyl-L-homocysteine + H(+). Specifically methylates the guanine in position 1207 of 16S rRNA in the 30S particle. This is Ribosomal RNA small subunit methyltransferase C from Pseudomonas paraeruginosa (strain DSM 24068 / PA7) (Pseudomonas aeruginosa (strain PA7)).